A 1538-amino-acid chain; its full sequence is Phenolphthiocerol/phthiocerol polyketide synthase subunit B (1538 aa).

One can recognise a Ketosynthase family 3 (KS3) domain in the interval alanine 33–glutamine 455. Active-site for beta-ketoacyl synthase activity residues include cysteine 205, histidine 340, and histidine 377. An acyltransferase region spans residues aspartate 553–histidine 882. The active-site For malonyltransferase activity is the serine 649. Serine 1153–leucine 1196 contributes to the NADP(+) binding site. Residues serine 1153–serine 1328 form a beta-ketoacyl reductase region. Residues aspartate 1423–leucine 1498 form the Carrier domain. Serine 1458 carries the O-(pantetheine 4'-phosphoryl)serine modification.

Requires NADP(+) as cofactor. Pantetheine 4'-phosphate serves as cofactor.

The enzyme catalyses icosanoyl-[(phenol)carboxyphthiodiolenone synthase] + 2 (S)-methylmalonyl-CoA + 3 malonyl-CoA + 5 NADPH + 10 H(+) = C32-carboxyphthiodiolenone-[(phenol)carboxyphthiodiolenone synthase] + 5 CO2 + 5 NADP(+) + 5 CoA + 2 H2O. It carries out the reaction docosanoyl-[(phenol)carboxyphthiodiolenone synthase] + 2 (S)-methylmalonyl-CoA + 3 malonyl-CoA + 5 NADPH + 10 H(+) = C34-carboxyphthiodiolenone-[(phenol)carboxyphthiodiolenone synthase] + 5 CO2 + 5 NADP(+) + 5 CoA + 2 H2O. The catalysed reaction is 17-(4-hydroxyphenyl)heptadecanoyl-[(phenol)carboxyphthiodiolenone synthase] + 2 (S)-methylmalonyl-CoA + 3 malonyl-CoA + 5 NADPH + 10 H(+) = C35-(phenol)carboxyphthiodiolenone-[(phenol)carboxyphthiodiolenone synthase] + 5 CO2 + 5 NADP(+) + 5 CoA + 2 H2O. It catalyses the reaction 19-(4-hydroxyphenyl)nonadecanoyl-[(phenol)carboxyphthiodiolenone synthase] + 2 (S)-methylmalonyl-CoA + 3 malonyl-CoA + 5 NADPH + 10 H(+) = C37-(phenol)carboxyphthiodiolenone-[(phenol)carboxyphthiodiolenone synthase] + 5 CO2 + 5 NADP(+) + 5 CoA + 2 H2O. Its pathway is lipid metabolism; fatty acid biosynthesis. Functionally, part of the PpsABCDE complex involved in the biosynthesis of the lipid core common to phthiocerols and phenolphthiocerols by successive additions of malonyl-CoA or methylmalonyl-CoA extender units. PpsA can accept as substrate the activated forms of either icosanoyl (C20), docosanoyl (C22) or lignoceroyl (C24) groups from FadD26, or a (4-hydroxyphenyl)-C17 or (4-hydroxyphenyl)-C19 fatty acyl from FadD29. PpsA initiates the biosynthesis and extends its substrate using a malonyl-CoA extender unit. The PpsB and PpsC proteins add the second and third malonyl-CoA extender units. PpsD adds an (R)-methylmalonyl unit and PpsE adds a second (R)-methylmalonyl unit. The incorporation of the methylmalonyl units results in formation of two branched methyl groups in the elongated product. This Mycobacterium tuberculosis (strain CDC 1551 / Oshkosh) protein is Phenolphthiocerol/phthiocerol polyketide synthase subunit B (ppsB).